A 201-amino-acid chain; its full sequence is LexA repressor 1 (201 aa).

Residues 27-47 (LAEIAQAFGFASRNAAQKHVQ) constitute a DNA-binding region (H-T-H motif). Residues Ser-122 and Lys-159 each act as for autocatalytic cleavage activity in the active site.

Belongs to the peptidase S24 family. Homodimer.

The catalysed reaction is Hydrolysis of Ala-|-Gly bond in repressor LexA.. Its function is as follows. Represses a number of genes involved in the response to DNA damage (SOS response), including recA and lexA. In the presence of single-stranded DNA, RecA interacts with LexA causing an autocatalytic cleavage which disrupts the DNA-binding part of LexA, leading to derepression of the SOS regulon and eventually DNA repair. This Xanthomonas axonopodis pv. citri (strain 306) protein is LexA repressor 1.